A 623-amino-acid chain; its full sequence is Hemagglutinin component HA-70 type D (623 aa).

Botulinum toxins are produced as large progenitor toxins of 12S (M toxin, about 280 kDa) and 16S (L toxin, about 650 kDa). M toxin consists of a non-toxic, non-hemagglutinin component (NTNHA) and the neurotoxin (BoNT/D). L toxin consists of the M toxin and the 3 hemagglutinin (HA) subcomponents of 70, 33, and 17 kDa. The stoichiometry of the whole complex has been modeled as one BoNT/D, one NTNHA, three HA-70, six HA-33 and three HA-17. HA-33 and HA-17 crystallize as a heterotrimer with two HA-33 and one HA-17. In terms of processing, limited treatment of L toxin with pepsin or trypsin produces shorter HA-70 proteins (called HA-55, HA-23 and HA-22) sometimes observed in vivo in other strains of type C and D botulinum toxin preparations.

Its subcellular location is the secreted. Its function is as follows. The hemagglutinin (HA) component of the progenitor toxin protects the structural integrity of the neurotoxin; may increase internalization of the neurotoxin into the bloodstream of the host. Involved in binding to the small intestine through interactions with glycolipids and glycoproteins containing sialic acid moieties. Erythrocyte agglutination only occurs when the entire complex is assembled. This HA subunit probably connects toxin/NTNHA to HA-33 and HA-17, the other components of the HA complex, and it may also protect the M toxin from proteolysis upon secretion. This chain is Hemagglutinin component HA-70 type D, found in Clostridium botulinum D phage (Clostridium botulinum D bacteriophage).